Reading from the N-terminus, the 229-residue chain is Large ribosomal subunit protein uL1 (229 aa).

The protein belongs to the universal ribosomal protein uL1 family. In terms of assembly, part of the 50S ribosomal subunit.

In terms of biological role, binds directly to 23S rRNA. The L1 stalk is quite mobile in the ribosome, and is involved in E site tRNA release. Protein L1 is also a translational repressor protein, it controls the translation of the L11 operon by binding to its mRNA. The protein is Large ribosomal subunit protein uL1 of Lactococcus lactis subsp. cremoris (strain MG1363).